The primary structure comprises 222 residues: Sugar fermentation stimulation protein homolog (222 aa).

The protein belongs to the SfsA family.

This chain is Sugar fermentation stimulation protein homolog, found in Thermotoga maritima (strain ATCC 43589 / DSM 3109 / JCM 10099 / NBRC 100826 / MSB8).